A 554-amino-acid polypeptide reads, in one-letter code: Glucose-6-phosphate isomerase (554 aa).

Catalysis depends on E359, which acts as the Proton donor. Catalysis depends on residues H390 and K518.

It belongs to the GPI family.

The protein resides in the cytoplasm. The catalysed reaction is alpha-D-glucose 6-phosphate = beta-D-fructose 6-phosphate. Its pathway is carbohydrate biosynthesis; gluconeogenesis. It functions in the pathway carbohydrate degradation; glycolysis; D-glyceraldehyde 3-phosphate and glycerone phosphate from D-glucose: step 2/4. Functionally, catalyzes the reversible isomerization of glucose-6-phosphate to fructose-6-phosphate. In Pseudomonas fluorescens (strain SBW25), this protein is Glucose-6-phosphate isomerase.